Here is a 930-residue protein sequence, read N- to C-terminus: Translation initiation factor IF-2 (930 aa).

A compositionally biased stretch (low complexity) spans 50–67 (FKPAAAPKVEAKPAAPKV). Disordered regions lie at residues 50 to 217 (FKPA…SSEE) and 260 to 346 (EVVP…HELP). 2 stretches are compositionally biased toward basic and acidic residues: residues 68 to 90 (SAEK…EAKP) and 110 to 125 (FKAE…AERR). Low complexity predominate over residues 129–141 (KGNNRDQQQNGNR). Composition is skewed to basic and acidic residues over residues 157-167 (RDNRRFNDQAK) and 262-295 (VPEK…DGPR). Residues 309 to 318 (NQKNSNWNNN) are compositionally biased toward low complexity. Residues 337–346 (VTERKFHELP) show a composition bias toward basic and acidic residues. In terms of domain architecture, tr-type G spans 432-599 (ERPPVVTIMG…TVLLVAEIQE (168 aa)). Residues 441 to 448 (GHVDHGKT) form a G1 region. A GTP-binding site is contributed by 441 to 448 (GHVDHGKT). Residues 466–470 (GITQH) are G2. The G3 stretch occupies residues 487 to 490 (DTPG). Residues 487–491 (DTPGH) and 541–544 (NKID) each bind GTP. Positions 541 to 544 (NKID) are G4. The G5 stretch occupies residues 577–579 (SAK).

It belongs to the TRAFAC class translation factor GTPase superfamily. Classic translation factor GTPase family. IF-2 subfamily.

The protein resides in the cytoplasm. Functionally, one of the essential components for the initiation of protein synthesis. Protects formylmethionyl-tRNA from spontaneous hydrolysis and promotes its binding to the 30S ribosomal subunits. Also involved in the hydrolysis of GTP during the formation of the 70S ribosomal complex. The polypeptide is Translation initiation factor IF-2 (Streptococcus pneumoniae (strain P1031)).